We begin with the raw amino-acid sequence, 566 residues long: Phenylalanine--tRNA ligase beta subunit (566 aa).

Residues 287 to 362 form the B5 domain; that stretch reads YFQEEVEFDV…IGEGLASFYP (76 aa). Asp-340, Asp-346, Glu-349, and Asp-350 together coordinate Mg(2+).

The protein belongs to the phenylalanyl-tRNA synthetase beta subunit family. Type 2 subfamily. Tetramer of two alpha and two beta subunits. It depends on Mg(2+) as a cofactor.

Its subcellular location is the cytoplasm. The catalysed reaction is tRNA(Phe) + L-phenylalanine + ATP = L-phenylalanyl-tRNA(Phe) + AMP + diphosphate + H(+). This is Phenylalanine--tRNA ligase beta subunit from Borrelia garinii subsp. bavariensis (strain ATCC BAA-2496 / DSM 23469 / PBi) (Borreliella bavariensis).